A 130-amino-acid polypeptide reads, in one-letter code: Small ribosomal subunit protein uS8 (130 aa).

Belongs to the universal ribosomal protein uS8 family. In terms of assembly, part of the 30S ribosomal subunit. Contacts proteins S5 and S12.

One of the primary rRNA binding proteins, it binds directly to 16S rRNA central domain where it helps coordinate assembly of the platform of the 30S subunit. The protein is Small ribosomal subunit protein uS8 of Erwinia tasmaniensis (strain DSM 17950 / CFBP 7177 / CIP 109463 / NCPPB 4357 / Et1/99).